We begin with the raw amino-acid sequence, 511 residues long: Glycerol kinase (511 aa).

Threonine 11 is an ADP binding site. ATP is bound by residues threonine 11, serine 12, and serine 13. Threonine 11 lines the sn-glycerol 3-phosphate pocket. Arginine 15 is an ADP binding site. 4 residues coordinate sn-glycerol 3-phosphate: arginine 81, glutamate 82, tyrosine 133, and aspartate 242. Glycerol is bound by residues arginine 81, glutamate 82, tyrosine 133, aspartate 242, and glutamine 243. The ADP site is built by threonine 264 and glycine 321. ATP is bound by residues threonine 264, glycine 321, glutamine 325, and glycine 426. Glycine 426 and asparagine 430 together coordinate ADP.

Belongs to the FGGY kinase family.

The enzyme catalyses glycerol + ATP = sn-glycerol 3-phosphate + ADP + H(+). Its pathway is polyol metabolism; glycerol degradation via glycerol kinase pathway; sn-glycerol 3-phosphate from glycerol: step 1/1. Its activity is regulated as follows. Inhibited by fructose 1,6-bisphosphate (FBP). Functionally, key enzyme in the regulation of glycerol uptake and metabolism. Catalyzes the phosphorylation of glycerol to yield sn-glycerol 3-phosphate. This is Glycerol kinase from Verminephrobacter eiseniae (strain EF01-2).